A 789-amino-acid chain; its full sequence is Probable phosphoketolase 1 (789 aa).

This sequence belongs to the XFP family. Thiamine diphosphate serves as cofactor.

In Rhizobium meliloti (strain 1021) (Ensifer meliloti), this protein is Probable phosphoketolase 1.